The chain runs to 175 residues: Ribosome maturation factor RimM (175 aa).

The PRC barrel domain maps to 96–175 (EGDYYWHDLI…TIEVDWDAGF (80 aa)).

This sequence belongs to the RimM family. In terms of assembly, binds ribosomal protein uS19.

The protein resides in the cytoplasm. An accessory protein needed during the final step in the assembly of 30S ribosomal subunit, possibly for assembly of the head region. Essential for efficient processing of 16S rRNA. May be needed both before and after RbfA during the maturation of 16S rRNA. It has affinity for free ribosomal 30S subunits but not for 70S ribosomes. The protein is Ribosome maturation factor RimM of Haemophilus influenzae (strain PittEE).